Here is a 387-residue protein sequence, read N- to C-terminus: D(4) dopamine receptor (387 aa).

Residues 1–34 (MGNSSATEDGGLLAGRGPESLGTGAGLGGAGAAA) lie on the Extracellular side of the membrane. Asparagine 3 carries N-linked (GlcNAc...) asparagine glycosylation. A helical transmembrane segment spans residues 35–57 (LVGGVLLIGLVLAGNSLVCVSVA). Residues 58–67 (SERTLQTPTN) lie on the Cytoplasmic side of the membrane. Residues 68–90 (YFIVSLAAADLLLAVLVLPLFVY) form a helical membrane-spanning segment. Position 77 (aspartate 77) interacts with Na(+). The Extracellular portion of the chain corresponds to 91–106 (SEVQGGVWLLSPRLCD). A disulfide bridge connects residues cysteine 105 and cysteine 180. The helical transmembrane segment at 107-128 (TLMAMDVMLCTASIFNLCAISV) threads the bilayer. Position 119 (serine 119) interacts with Na(+). Topologically, residues 129 to 146 (DRFVAVTVPLRYNQQGQC) are cytoplasmic. The helical transmembrane segment at 147 to 170 (QLLLIAATWLLSAAVASPVVCGLN) threads the bilayer. The Extracellular portion of the chain corresponds to 171–186 (DVPGRDPAVCCLENRD). The chain crosses the membrane as a helical span at residues 187–208 (YVVYSSVCSFFLPCPLMLLLYW). Residues 209–314 (ATFRGLRRWE…ITGRERKAMR (106 aa)) lie on the Cytoplasmic side of the membrane. Disordered regions lie at residues 224-247 (KLHS…TQGP) and 287-306 (AALP…AKIT). A helical transmembrane segment spans residues 315-337 (VLPVVVGAFLVCWTPFFVVHITR). Residues 338–346 (ALCPACFVS) are Extracellular-facing. A disulfide bond links cysteine 340 and cysteine 343. The chain crosses the membrane as a helical span at residues 347 to 369 (PRLVSAVTWLGYVNSALNPIIYT). At 370 to 387 (IFNAEFRSVFRKTLRLRC) the chain is on the cytoplasmic side. A lipid anchor (S-palmitoyl cysteine) is attached at cysteine 387.

This sequence belongs to the G-protein coupled receptor 1 family. In terms of assembly, forms homo- and heterooligomers with DRD2. D4.7 allele exhibits higher affinity for homodimers compared to DRD2 heterodimers, while alleles D42. and 4.4 have similar affinities for both. The interaction with DRD2 may modulate agonist-induced downstream signaling. Interacts with CLIC6. Interacts with GPRASP1. May interact with ADORA2A. Interacts with KLHL12. Palmitoylated. Palmitoylation of the C-terminal Cys is important for normal expression at the cell membrane. In terms of tissue distribution, detected in olfactory bulb, hypothalamus, olfactory tubercle, brainstem and striatum.

The protein resides in the cell membrane. Functionally, dopamine receptor responsible for neuronal signaling in the mesolimbic system of the brain, an area of the brain that regulates emotion and complex behavior. Activated by dopamine, but also by epinephrine and norepinephrine, and by numerous synthetic agonists and drugs. Agonist binding triggers signaling via G proteins that inhibit adenylyl cyclase. Modulates the circadian rhythm of contrast sensitivity by regulating the rhythmic expression of NPAS2 in the retinal ganglion cells. This is D(4) dopamine receptor (Drd4) from Mus musculus (Mouse).